Reading from the N-terminus, the 212-residue chain is Inactive ribonuclease-like protein 10 (212 aa).

An N-terminal signal peptide occupies residues M1 to G24.

It belongs to the pancreatic ribonuclease family. Post-translationally, the N-terminus is blocked. Glycosylated. In terms of tissue distribution, male-specific expression in proximal caput of the epididymis.

The protein localises to the secreted. Its function is as follows. Secreted proximal epididymal protein required for post-testicular sperm maturation and male fertility. May be involved in sperm adhesion to the egg zona pellucida. Does not have ribonuclease activity. This is Inactive ribonuclease-like protein 10 (RNASE10) from Ovis aries (Sheep).